The chain runs to 501 residues: Probable cytochrome P450 508A4 (501 aa).

Residues 1–21 traverse the membrane as a helical segment; the sequence is MIMLIKVFVLLLVVYILHNSY. A heme-binding site is contributed by C445.

Belongs to the cytochrome P450 family. It depends on heme as a cofactor.

It is found in the membrane. The sequence is that of Probable cytochrome P450 508A4 (cyp508A4) from Dictyostelium discoideum (Social amoeba).